A 142-amino-acid polypeptide reads, in one-letter code: Cytochrome c-type biogenesis protein CcmE (142 aa).

The Cytoplasmic segment spans residues 1–2 (MK). The helical; Signal-anchor for type II membrane protein transmembrane segment at 3–23 (GKYLLGILVILGALGYMVFGG) threads the bilayer. Over 24-142 (LGRNLVYFLT…EVRKLIEEAQ (119 aa)) the chain is Periplasmic. Heme contacts are provided by H118 and Y122.

This sequence belongs to the CcmE/CycJ family.

Its subcellular location is the cell inner membrane. In terms of biological role, heme chaperone required for the biogenesis of c-type cytochromes. Transiently binds heme delivered by CcmC and transfers the heme to apo-cytochromes in a process facilitated by CcmF and CcmH. The sequence is that of Cytochrome c-type biogenesis protein CcmE from Thermus thermophilus (strain ATCC 27634 / DSM 579 / HB8).